Reading from the N-terminus, the 243-residue chain is NAD-dependent protein deacetylase (243 aa).

A Deacetylase sirtuin-type domain is found at Met1–Glu243. Residues Ala24, Phe35, Arg36, Gln105, Ile107, Asp108, and His123 each contribute to the NAD(+) site. Phe35 lines the nicotinamide pocket. Nicotinamide-binding residues include Ile107 and Asp108. His123 acts as the Proton acceptor in catalysis. Positions 131, 134, 151, and 154 each coordinate Zn(2+). Residues Ser192, Ser193, Asn215, and Asp232 each coordinate NAD(+).

This sequence belongs to the sirtuin family. Class U subfamily. Zn(2+) is required as a cofactor.

Its subcellular location is the cytoplasm. It catalyses the reaction N(6)-acetyl-L-lysyl-[protein] + NAD(+) + H2O = 2''-O-acetyl-ADP-D-ribose + nicotinamide + L-lysyl-[protein]. NAD-dependent protein deacetylase which modulates the activities of several enzymes which are inactive in their acetylated form. This is NAD-dependent protein deacetylase from Staphylococcus aureus (strain MSSA476).